Consider the following 114-residue polypeptide: Abscisic stress-ripening protein 2 (114 aa).

2 disordered regions span residues 1-25 (MAEE…GGPV) and 88-114 (FHEH…HHHY). The span at 7–16 (QHHHHLFHHK) shows a compositional bias: basic residues. The segment covering 97–107 (AKKEKKEVEGG) has biased composition (basic and acidic residues).

It belongs to the abscisic acid and water stress-induced protein family.

This chain is Abscisic stress-ripening protein 2, found in Solanum lycopersicum (Tomato).